The sequence spans 164 residues: HTH-type transcriptional regulator IscR (164 aa).

The region spanning 2-131 (RLTSKGRYAV…NNITLGELVN (130 aa)) is the HTH rrf2-type domain. The H-T-H motif DNA-binding region spans 28-51 (LADISERQGISLSYLEQLFSRLRK). Residues C92, C98, and C104 each coordinate [2Fe-2S] cluster.

Requires [2Fe-2S] cluster as cofactor.

In terms of biological role, regulates the transcription of several operons and genes involved in the biogenesis of Fe-S clusters and Fe-S-containing proteins. This Salmonella choleraesuis (strain SC-B67) protein is HTH-type transcriptional regulator IscR.